Reading from the N-terminus, the 407-residue chain is 1-deoxy-D-xylulose 5-phosphate reductoisomerase (407 aa).

6 residues coordinate NADPH: threonine 25, glycine 26, serine 27, isoleucine 28, asparagine 53, and asparagine 136. Lysine 137 is a 1-deoxy-D-xylulose 5-phosphate binding site. NADPH is bound at residue glutamate 138. A Mn(2+)-binding site is contributed by aspartate 162. Residues serine 163, glutamate 164, serine 188, and histidine 211 each contribute to the 1-deoxy-D-xylulose 5-phosphate site. Position 164 (glutamate 164) interacts with Mn(2+). Glycine 217 lines the NADPH pocket. Residues serine 224, asparagine 229, lysine 230, and glutamate 233 each coordinate 1-deoxy-D-xylulose 5-phosphate. Glutamate 233 contributes to the Mn(2+) binding site.

Belongs to the DXR family. Mg(2+) serves as cofactor. Mn(2+) is required as a cofactor.

It catalyses the reaction 2-C-methyl-D-erythritol 4-phosphate + NADP(+) = 1-deoxy-D-xylulose 5-phosphate + NADPH + H(+). It functions in the pathway isoprenoid biosynthesis; isopentenyl diphosphate biosynthesis via DXP pathway; isopentenyl diphosphate from 1-deoxy-D-xylulose 5-phosphate: step 1/6. Functionally, catalyzes the NADPH-dependent rearrangement and reduction of 1-deoxy-D-xylulose-5-phosphate (DXP) to 2-C-methyl-D-erythritol 4-phosphate (MEP). The polypeptide is 1-deoxy-D-xylulose 5-phosphate reductoisomerase (Rhodopseudomonas palustris (strain TIE-1)).